The following is a 942-amino-acid chain: Diacylglycerol kinase theta (942 aa).

Positions 1 to 59 (MAAAAEPGARAWLGGGSPRPGSPACSPVLGSGGRARPGPGPGPGPERAGVRAPGPAAAP) are disordered. A phosphoserine mark is found at Ser22 and Ser26. The segment covering 45–59 (PERAGVRAPGPAAAP) has biased composition (low complexity). Phorbol-ester/DAG-type zinc fingers lie at residues 60 to 108 (GHSF…RIPC), 121 to 168 (AHCF…CSDC), and 183 to 234 (HHHW…APEC). The disordered stretch occupies residues 269-295 (EPGEGGDGADGSAAVGPGRETQATPES). Positions 395–494 (AQEVLKIYPG…TRFYVAESRD (100 aa)) constitute a Ras-associating domain. 2 short sequence motifs (LXXLL motif) span residues 555–559 (LYMLL) and 574–578 (LPDLL). The 138-residue stretch at 584–721 (PDSCPLLVFV…MDRWTILLDA (138 aa)) folds into the DAGKc domain. Residues 908 to 942 (PKVHMLRKAKQKPRRAGTTRDARADAAPAPESDPR) are disordered. Positions 911 to 924 (HMLRKAKQKPRRAG) are enriched in basic residues. Positions 932-942 (DAAPAPESDPR) are enriched in low complexity.

It belongs to the eukaryotic diacylglycerol kinase family. As to quaternary structure, interacts with RHOA (constitutively activated, GTP-bound); the interaction inhibits DGKQ. Interacts with PRKCE. Interacts with PRKCH. Interacts with PLCB1. Interacts with NR5A1; the interaction requires both LXXLL motifs in DGKQ and is required for full phosphatidic acid-mediated activation of NR5A1. Phosphorylated by PRKCE and PRKCH in vitro.

The protein localises to the cytoplasm. Its subcellular location is the cytosol. It localises to the cell membrane. The protein resides in the synapse. It is found in the cytoskeleton. The protein localises to the nucleus. Its subcellular location is the nucleus speckle. It localises to the nucleus matrix. It catalyses the reaction a 1,2-diacyl-sn-glycerol + ATP = a 1,2-diacyl-sn-glycero-3-phosphate + ADP + H(+). The catalysed reaction is a 1-O-alkyl-sn-glycerol + ATP = a 1-O-alkyl-sn-glycero-3-phosphate + ADP + H(+). The enzyme catalyses 1-O-alkyl-2-acyl-sn-glycerol + ATP = 1-O-alkyl-2-acyl-sn-glycero-3-phosphate + ADP + H(+). It carries out the reaction 1,2-di-(9Z-octadecenoyl)-sn-glycerol + ATP = 1,2-di-(9Z-octadecenoyl)-sn-glycero-3-phosphate + ADP + H(+). It catalyses the reaction 1-O-hexadecyl-sn-glycerol + ATP = 1-O-hexadecyl-sn-glycero-3-phosphate + ADP + H(+). The catalysed reaction is 1-O-hexadecyl-2-acetyl-sn-glycerol + ATP = 1-O-hexadecyl-2-acetyl-sn-glycero-3-phosphate + ADP + H(+). The enzyme catalyses 1-octadecanoyl-2-(5Z,8Z,11Z,14Z-eicosatetraenoyl)-sn-glycerol + ATP = 1-octadecanoyl-2-(5Z,8Z,11Z,14Z-eicosatetraenoyl)-sn-glycero-3-phosphate + ADP + H(+). It participates in lipid metabolism; glycerolipid metabolism. Its activity is regulated as follows. Activated by phosphatidylserine. In terms of biological role, diacylglycerol kinase that converts diacylglycerol/DAG into phosphatidic acid/phosphatidate/PA and regulates the respective levels of these two bioactive lipids. Thereby, acts as a central switch between the signaling pathways activated by these second messengers with different cellular targets and opposite effects in numerous biological processes. Within the adrenocorticotropic hormone signaling pathway, produces phosphatidic acid which in turn activates NR5A1 and subsequent steroidogenic gene transcription. Also functions downstream of the nerve growth factor signaling pathway being specifically activated in the nucleus by the growth factor. Through its diacylglycerol activity also regulates synaptic vesicle endocytosis. The polypeptide is Diacylglycerol kinase theta (Homo sapiens (Human)).